A 147-amino-acid chain; its full sequence is Receptor activity-modifying protein 3 (147 aa).

An N-terminal signal peptide occupies residues 1–22 (MATPAQRLHLLPLLLLLCGECA). Residues 23–112 (QVCGCNETGM…CTVDRTHWED (90 aa)) are Extracellular-facing. 4 N-linked (GlcNAc...) asparagine glycosylation sites follow: Asn-28, Asn-57, Asn-70, and Asn-102. 2 disulfides stabilise this stretch: Cys-39–Cys-71 and Cys-56–Cys-103. Residues 113–137 (PPDEVLIPLIAVPVLLTVAMAGLVV) traverse the membrane as a helical segment. The Cytoplasmic portion of the chain corresponds to 138 to 147 (WRSKRTDRLL).

This sequence belongs to the RAMP family. As to quaternary structure, heterodimer of CALCRL and RAMP3; interaction induces allosteric modulation of CALCRL function and ligand specificity for adrenomedullin/ADM and intermedin/ADM2. Heterodimer of CALCR and RAMP3; interaction form the receptor complex AMYR3 for amylin/IAPP. Interacts with GPER1.

It localises to the cell membrane. The protein resides in the membrane. Its function is as follows. Accessory protein that interacts with and modulates the function of G-protein coupled receptors including calcitonin gene-related peptide type 1 receptor (CALCRL), calcitonin receptor (CALCR) and G-protein coupled estrogen receptor 1 (GPER1). Required for the transport of CALCRL and GPER1 receptors to the plasma membrane. Plays a role in cardioprotection by reducing cardiac hypertrophy and perivascular fibrosis in a GPER1-dependent manner. Together with CALCRL, form a receptor complex for adrenomedullin/ADM and intermedin/ADM2. Together with CALCR, act as a receptor complex for amylin/IAPP. This chain is Receptor activity-modifying protein 3, found in Rattus norvegicus (Rat).